We begin with the raw amino-acid sequence, 219 residues long: 7-cyano-7-deazaguanine synthase (219 aa).

Position 10 to 20 (10 to 20 (FSGGQDSTTCL)) interacts with ATP. Residues cysteine 188, cysteine 196, cysteine 199, and cysteine 202 each coordinate Zn(2+).

It belongs to the QueC family. Requires Zn(2+) as cofactor.

The catalysed reaction is 7-carboxy-7-deazaguanine + NH4(+) + ATP = 7-cyano-7-deazaguanine + ADP + phosphate + H2O + H(+). Its pathway is purine metabolism; 7-cyano-7-deazaguanine biosynthesis. In terms of biological role, catalyzes the ATP-dependent conversion of 7-carboxy-7-deazaguanine (CDG) to 7-cyano-7-deazaguanine (preQ(0)). The chain is 7-cyano-7-deazaguanine synthase from Neisseria meningitidis serogroup A / serotype 4A (strain DSM 15465 / Z2491).